A 505-amino-acid chain; its full sequence is ATP synthase subunit alpha (505 aa).

G169–T176 serves as a coordination point for ATP.

This sequence belongs to the ATPase alpha/beta chains family. F-type ATPases have 2 components, CF(1) - the catalytic core - and CF(0) - the membrane proton channel. CF(1) has five subunits: alpha(3), beta(3), gamma(1), delta(1), epsilon(1). CF(0) has three main subunits: a(1), b(2) and c(9-12). The alpha and beta chains form an alternating ring which encloses part of the gamma chain. CF(1) is attached to CF(0) by a central stalk formed by the gamma and epsilon chains, while a peripheral stalk is formed by the delta and b chains.

It localises to the cell membrane. The enzyme catalyses ATP + H2O + 4 H(+)(in) = ADP + phosphate + 5 H(+)(out). Its function is as follows. Produces ATP from ADP in the presence of a proton gradient across the membrane. The alpha chain is a regulatory subunit. This is ATP synthase subunit alpha from Pediococcus pentosaceus (strain ATCC 25745 / CCUG 21536 / LMG 10740 / 183-1w).